The chain runs to 653 residues: Leucine-rich repeat-containing protein 4 (653 aa).

The first 38 residues, 1 to 38 (MKLLWQVTVHHHTWNAILLPFVYLTAQVWILCAAIAAA), serve as a signal peptide directing secretion. In terms of domain architecture, LRRNT spans 39-75 (ASAGPQNCPSVCSCSNQFSKVVCTRRGLSEVPQGIPS). Over 39-527 (ASAGPQNCPS…SLDEVMKTTK (489 aa)) the chain is Extracellular. 2 disulfides stabilise this stretch: Cys-46–Cys-52 and Cys-50–Cys-61. LRR repeat units follow at residues 76-97 (NTRYLNLMENNIQMIQADTFRH), 100-121 (HLEVLQLGRNSIRQIEVGAFNG), 124-145 (SLNTLELFDNWLTVIPSGAFEY), 148-169 (KLRELWLRNNPIESIPSYAFNR), 172-194 (SLMRLDLGELKKLEYISEGAFEG), 197-218 (NLKYLNLGMCNIKDMPNLTPLV), 219-240 (GLEELEMSGNHFPEIRPGSFHG), 243-264 (SLKKLWVMNSQVSLIERNAFDG), and 267-288 (SLVELNLAHNNLSSLPHDLFTP). Residues Asn-277, Asn-322, Asn-363, Asn-388, Asn-410, Asn-434, Asn-440, Asn-447, and Asn-450 are each glycosylated (N-linked (GlcNAc...) asparagine). One can recognise an LRRCT domain in the interval 300–352 (NPWNCDCDILWLAWWLREYIPTNSTCCGRCHAPMHMRGRYLVEVDQASFQCSA). 2 cysteine pairs are disulfide-bonded: Cys-304–Cys-329 and Cys-306–Cys-350. The region spanning 353–442 (PFIMDAPRDL…SNASAYLNVS (90 aa)) is the Ig-like domain. Cys-374 and Cys-424 are disulfide-bonded. A helical membrane pass occupies residues 528–548 (IIIGCFVAVTLLAAAMLIVFY). At 549–653 (KLRKRHQQRS…TKDKVQETQI (105 aa)) the chain is on the cytoplasmic side.

Interacts with DLG4. Interacts (via LRR repeats) with NTNG2. Forms a complex with DLG4 and with NMDA receptors. Post-translationally, N-glycosylated. In terms of tissue distribution, specifically expressed in brain.

It is found in the membrane. The protein localises to the postsynaptic cell membrane. Synaptic adhesion protein. Regulates the formation of exitatory synapses through the recruitment of pre-and-postsynaptic proteins. Organize the lamina/pathway-specific differentiation of dendrites. Plays an important role for auditory synaptic responses. Involved in the suppression of glioma. This chain is Leucine-rich repeat-containing protein 4 (LRRC4), found in Homo sapiens (Human).